Here is a 322-residue protein sequence, read N- to C-terminus: ATP-dependent 6-phosphofructokinase 1 (322 aa).

Gly-11 lines the ATP pocket. 21–25 is an ADP binding site; it reads RAVVR. ATP is bound by residues 72-73 and 102-105; these read RS and GDGT. A Mg(2+)-binding site is contributed by Asp-103. 126-128 contributes to the substrate binding site; sequence TID. Asp-128 serves as the catalytic Proton acceptor. Arg-155 provides a ligand contact to ADP. Substrate-binding positions include Arg-163 and 170 to 172; that span reads MGR. Residues 186 to 188, Arg-212, and 214 to 216 each bind ADP; these read GAE and KKS. Substrate is bound by residues Glu-223, Arg-246, and 252-255; that span reads HIQR.

It belongs to the phosphofructokinase type A (PFKA) family. ATP-dependent PFK group I subfamily. Prokaryotic clade 'B1' sub-subfamily. In terms of assembly, homotetramer. The cofactor is Mg(2+).

The protein localises to the cytoplasm. The catalysed reaction is beta-D-fructose 6-phosphate + ATP = beta-D-fructose 1,6-bisphosphate + ADP + H(+). Its pathway is carbohydrate degradation; glycolysis; D-glyceraldehyde 3-phosphate and glycerone phosphate from D-glucose: step 3/4. Its activity is regulated as follows. Allosterically activated by ADP and other diphosphonucleosides. Allosterically inhibited by phosphoenolpyruvate which induces the dissociation of the active tetramer into an inactive two-subunit forms. Catalyzes the phosphorylation of D-fructose 6-phosphate to fructose 1,6-bisphosphate by ATP, the first committing step of glycolysis. This chain is ATP-dependent 6-phosphofructokinase 1, found in Thermus thermophilus (strain ATCC 27634 / DSM 579 / HB8).